An 805-amino-acid polypeptide reads, in one-letter code: RFX-like transcription factor daf-19 (805 aa).

Positions 1–14 are enriched in polar residues; that stretch reads MTNEEPVPSTSSVL. Residues 1 to 113 are disordered; sequence MTNEEPVPST…TPRKKMEPED (113 aa). Basic and acidic residues predominate over residues 19–92; it reads KNVKIETPSR…DSKSLSKETH (74 aa). The span at 93 to 104 shows a compositional bias: polar residues; that stretch reads NTISTRSSSSGT. Positions 260–334 form a DNA-binding region, RFX-type winged-helix; the sequence is TVNWLFENYE…YHYYGIRLKD (75 aa).

The protein belongs to the RFX family. Ciliated sensory neurons. In terms of tissue distribution, expressed in the male tail HOB and RnB neurons but not in male-specific CEM head neurons or other ciliated neurons.

The protein resides in the nucleus. In terms of biological role, probable transcription factor. May regulate some genes of ciliated sensory neurons. May activate the expression of the shared components of sensory cilia, but not the cell-type-specific expression. Together with transcription factor atf-7, involved in regulation of the serotonergic response of ADF neurons to pathogenic food. Functionally, involved in male mating behavior; may play a role in functional specialization of PKD ciliated sensory neurons. This Caenorhabditis elegans protein is RFX-like transcription factor daf-19.